Reading from the N-terminus, the 207-residue chain is Protein GrpE (207 aa).

Belongs to the GrpE family. Homodimer.

The protein resides in the cytoplasm. Its function is as follows. Participates actively in the response to hyperosmotic and heat shock by preventing the aggregation of stress-denatured proteins, in association with DnaK and GrpE. It is the nucleotide exchange factor for DnaK and may function as a thermosensor. Unfolded proteins bind initially to DnaJ; upon interaction with the DnaJ-bound protein, DnaK hydrolyzes its bound ATP, resulting in the formation of a stable complex. GrpE releases ADP from DnaK; ATP binding to DnaK triggers the release of the substrate protein, thus completing the reaction cycle. Several rounds of ATP-dependent interactions between DnaJ, DnaK and GrpE are required for fully efficient folding. This chain is Protein GrpE, found in Pelodictyon phaeoclathratiforme (strain DSM 5477 / BU-1).